Here is a 252-residue protein sequence, read N- to C-terminus: N-glycosylase/DNA lyase (252 aa).

8-oxoguanine contacts are provided by Q32, S60, and W71. Residues 129–193 (KTYYSDMEKL…KDSRIEKYTL (65 aa)) are helix-hairpin-helix. The active-site Schiff-base intermediate with DNA is the K153. Residues F157 and P183 each contribute to the 8-oxoguanine site. D185 is a catalytic residue. Residues D219 and W223 each coordinate 8-oxoguanine.

It belongs to the archaeal N-glycosylase/DNA lyase (AGOG) family.

The enzyme catalyses 2'-deoxyribonucleotide-(2'-deoxyribose 5'-phosphate)-2'-deoxyribonucleotide-DNA = a 3'-end 2'-deoxyribonucleotide-(2,3-dehydro-2,3-deoxyribose 5'-phosphate)-DNA + a 5'-end 5'-phospho-2'-deoxyribonucleoside-DNA + H(+). Functionally, DNA repair enzyme that is part of the base excision repair (BER) pathway; protects from oxidative damage by removing the major product of DNA oxidation, 8-oxoguanine (GO), from single- and double-stranded DNA substrates. This is N-glycosylase/DNA lyase from Methanococcus maripaludis (strain DSM 14266 / JCM 13030 / NBRC 101832 / S2 / LL).